Here is an 855-residue protein sequence, read N- to C-terminus: DNA mismatch repair protein MutS (855 aa).

621 to 628 (GPNMGGKS) provides a ligand contact to ATP.

It belongs to the DNA mismatch repair MutS family.

Its function is as follows. This protein is involved in the repair of mismatches in DNA. It is possible that it carries out the mismatch recognition step. This protein has a weak ATPase activity. The protein is DNA mismatch repair protein MutS of Francisella tularensis subsp. holarctica (strain OSU18).